Reading from the N-terminus, the 247-residue chain is 1-(5-phosphoribosyl)-5-[(5-phosphoribosylamino)methylideneamino] imidazole-4-carboxamide isomerase (247 aa).

Aspartate 8 serves as the catalytic Proton acceptor. The active-site Proton donor is the aspartate 129.

Belongs to the HisA/HisF family.

It is found in the cytoplasm. It carries out the reaction 1-(5-phospho-beta-D-ribosyl)-5-[(5-phospho-beta-D-ribosylamino)methylideneamino]imidazole-4-carboxamide = 5-[(5-phospho-1-deoxy-D-ribulos-1-ylimino)methylamino]-1-(5-phospho-beta-D-ribosyl)imidazole-4-carboxamide. It participates in amino-acid biosynthesis; L-histidine biosynthesis; L-histidine from 5-phospho-alpha-D-ribose 1-diphosphate: step 4/9. In Solidesulfovibrio magneticus (strain ATCC 700980 / DSM 13731 / RS-1) (Desulfovibrio magneticus), this protein is 1-(5-phosphoribosyl)-5-[(5-phosphoribosylamino)methylideneamino] imidazole-4-carboxamide isomerase.